Reading from the N-terminus, the 245-residue chain is 1-(5-phosphoribosyl)-5-[(5-phosphoribosylamino)methylideneamino] imidazole-4-carboxamide isomerase (245 aa).

Asp-15 serves as the catalytic Proton acceptor. Residue Asp-135 is the Proton donor of the active site.

This sequence belongs to the HisA/HisF family.

The protein localises to the cytoplasm. It catalyses the reaction 1-(5-phospho-beta-D-ribosyl)-5-[(5-phospho-beta-D-ribosylamino)methylideneamino]imidazole-4-carboxamide = 5-[(5-phospho-1-deoxy-D-ribulos-1-ylimino)methylamino]-1-(5-phospho-beta-D-ribosyl)imidazole-4-carboxamide. It participates in amino-acid biosynthesis; L-histidine biosynthesis; L-histidine from 5-phospho-alpha-D-ribose 1-diphosphate: step 4/9. This Haloquadratum walsbyi (strain DSM 16790 / HBSQ001) protein is 1-(5-phosphoribosyl)-5-[(5-phosphoribosylamino)methylideneamino] imidazole-4-carboxamide isomerase.